The sequence spans 231 residues: Chromosome partition protein MukE (231 aa).

Residues 211–231 (SLLADEEEQDYNEQAELEGEA) form a disordered region. Residues 214–231 (ADEEEQDYNEQAELEGEA) show a composition bias toward acidic residues.

This sequence belongs to the MukE family. Interacts, and probably forms a ternary complex, with MukF and MukB. The complex formation is stimulated by calcium or magnesium.

It is found in the cytoplasm. It localises to the nucleoid. Its function is as follows. Involved in chromosome condensation, segregation and cell cycle progression. May participate in facilitating chromosome segregation by condensation DNA from both sides of a centrally located replisome during cell division. Probably acts via its interaction with MukB and MukF. The polypeptide is Chromosome partition protein MukE (Vibrio vulnificus (strain CMCP6)).